Consider the following 1219-residue polypeptide: FYVE, RhoGEF and PH domain-containing protein 5 (1219 aa).

4 disordered regions span residues 1 to 85 (MGSP…SCQI), 94 to 113 (EEDF…PTES), 201 to 227 (SDTQ…GQVP), and 310 to 367 (GRES…PSSV). Over residues 23-50 (EVFEEDSADAAEGEDQIEQEEPPNCDEE) the composition is skewed to acidic residues. A compositionally biased stretch (polar residues) spans 201 to 214 (SDTQAASGTLSGYS). The span at 319–337 (REPEGAGLDSHRVRRKEDN) shows a compositional bias: basic and acidic residues. Over residues 346–356 (SSGSFSQRSHL) the composition is skewed to polar residues. A compositionally biased stretch (low complexity) spans 357-367 (PSSGTSTPSSV). The residue at position 555 (Thr555) is a Phosphothreonine. Low complexity predominate over residues 586–599 (ESKQQSSEQEAESA). Residues 586 to 644 (ESKQQSSEQEAESAYTEPYKVCPISAAPREDLTSDEEQGSSEEEDSASRDPSLSHKGEG) form a disordered region. Positions 618-630 (TSDEEQGSSEEED) are enriched in acidic residues. Positions 631–644 (SASRDPSLSHKGEG) are enriched in basic and acidic residues. The region spanning 647 to 840 (RALVIAQELL…SKVTDRANES (194 aa)) is the DH domain. Positions 869-963 (EFLKEGTLMR…WHYCLSRALP (95 aa)) constitute a PH 1 domain. Residues 998 to 1057 (VTHAMMCMNCGCDFSLTVRRHHCHACGKIVCRNCSRNKYPLKCLKNRMAKVCDGCFRELK) form an FYVE-type zinc finger. 8 residues coordinate Zn(2+): Cys1004, Cys1007, Cys1020, Cys1023, Cys1028, Cys1031, Cys1049, and Cys1052. The 99-residue stretch at 1120–1218 (GSAISGYLSR…WMEAMEDASV (99 aa)) folds into the PH 2 domain.

Expressed in highly vascularized tissues, such as lung, kidney and ovary.

Its subcellular location is the cytoplasm. It is found in the cytoskeleton. It localises to the cell projection. The protein localises to the ruffle membrane. The protein resides in the endoplasmic reticulum. Its subcellular location is the golgi apparatus. It is found in the early endosome. Its function is as follows. Activates CDC42, a member of the Ras-like family of Rho- and Rac proteins, by exchanging bound GDP for free GTP. Mediates VEGF-induced CDC42 activation. May regulate proangiogenic action of VEGF in vascular endothelial cells, including network formation, directional movement and proliferation. May play a role in regulating the actin cytoskeleton and cell shape. This is FYVE, RhoGEF and PH domain-containing protein 5 (Fgd5) from Mus musculus (Mouse).